Consider the following 436-residue polypeptide: GTPase Der (436 aa).

2 EngA-type G domains span residues 4–167 (PTIA…PNTS) and 175–351 (IKFS…MNQN). Residues 10 to 17 (GRPNVGKS), 57 to 61 (DTGGI), 119 to 122 (NKVD), 181 to 188 (GRPNVGKS), 229 to 233 (DTAGM), and 294 to 297 (NKWD) each bind GTP. Positions 352–436 (LRIPSALLND…PIKIIPRRRK (85 aa)) constitute a KH-like domain.

Belongs to the TRAFAC class TrmE-Era-EngA-EngB-Septin-like GTPase superfamily. EngA (Der) GTPase family. Associates with the 50S ribosomal subunit.

GTPase that plays an essential role in the late steps of ribosome biogenesis. The sequence is that of GTPase Der from Enterococcus faecalis (strain ATCC 700802 / V583).